A 300-amino-acid polypeptide reads, in one-letter code: tRNA dimethylallyltransferase (300 aa).

Residue 11–18 (GPTAVGKS) participates in ATP binding. 13 to 18 (TAVGKS) contacts substrate. The tract at residues 35 to 38 (DSIQ) is interaction with substrate tRNA.

It belongs to the IPP transferase family. In terms of assembly, monomer. It depends on Mg(2+) as a cofactor.

The catalysed reaction is adenosine(37) in tRNA + dimethylallyl diphosphate = N(6)-dimethylallyladenosine(37) in tRNA + diphosphate. Catalyzes the transfer of a dimethylallyl group onto the adenine at position 37 in tRNAs that read codons beginning with uridine, leading to the formation of N6-(dimethylallyl)adenosine (i(6)A). This Borreliella afzelii (strain PKo) (Borrelia afzelii) protein is tRNA dimethylallyltransferase.